The sequence spans 550 residues: Methionine--tRNA ligase (550 aa).

The 'HIGH' region motif lies at 13-23 (PYANGPLHFGH). Zn(2+) is bound by residues Cys145, Cys148, Cys158, and Cys161. A 'KMSKS' region motif is present at residues 331 to 335 (QFSKS). An ATP-binding site is contributed by Lys334.

Belongs to the class-I aminoacyl-tRNA synthetase family. MetG type 1 subfamily. As to quaternary structure, monomer. Zn(2+) serves as cofactor.

It is found in the cytoplasm. It catalyses the reaction tRNA(Met) + L-methionine + ATP = L-methionyl-tRNA(Met) + AMP + diphosphate. Is required not only for elongation of protein synthesis but also for the initiation of all mRNA translation through initiator tRNA(fMet) aminoacylation. This chain is Methionine--tRNA ligase, found in Chlamydia trachomatis serovar L2b (strain UCH-1/proctitis).